The primary structure comprises 447 residues: Phosphoglucosamine mutase (447 aa).

Catalysis depends on Ser-104, which acts as the Phosphoserine intermediate. Mg(2+)-binding residues include Ser-104, Asp-243, Asp-245, and Asp-247. Ser-104 bears the Phosphoserine mark.

It belongs to the phosphohexose mutase family. The cofactor is Mg(2+). Post-translationally, activated by phosphorylation.

It catalyses the reaction alpha-D-glucosamine 1-phosphate = D-glucosamine 6-phosphate. Its function is as follows. Catalyzes the conversion of glucosamine-6-phosphate to glucosamine-1-phosphate. This is Phosphoglucosamine mutase from Corynebacterium glutamicum (strain R).